The chain runs to 570 residues: Peptidyl-prolyl cis-trans isomerase FKBP9 (570 aa).

A signal peptide spans 1 to 24 (MAFGARGWRRWSLLLLLLWVTGQA). PPIase FKBP-type domains follow at residues 54–142 (GDFV…VDIW), 166–254 (SDFV…LDLH), 278–365 (GDFL…IDFH), and 389–477 (GDYL…LELV). N174, N286, N302, and N397 each carry an N-linked (GlcNAc...) asparagine glycan. 2 EF-hand domains span residues 488 to 523 (WNGEVSPNLFEEIDKDGNGEVLLEEFSEYIHAQVAS) and 533 to 568 (NAEMIVKNMFTNQDRNGDGKVTAEEFKLKDQETKHD). Residues D501, D503, N505, E507, E512, D546, N548, D550, K552, and E557 each coordinate Ca(2+). The Prevents secretion from ER motif lies at 567-570 (HDEL).

In terms of processing, phosphorylated.

The protein resides in the endoplasmic reticulum lumen. It carries out the reaction [protein]-peptidylproline (omega=180) = [protein]-peptidylproline (omega=0). Its activity is regulated as follows. Inhibited by FK506. In terms of biological role, PPIases accelerate the folding of proteins during protein synthesis. This chain is Peptidyl-prolyl cis-trans isomerase FKBP9 (Fkbp9), found in Rattus norvegicus (Rat).